The chain runs to 350 residues: Protein RecA (350 aa).

An ATP-binding site is contributed by 68–75 (GPESSGKT).

The protein belongs to the RecA family.

It is found in the cytoplasm. Its function is as follows. Can catalyze the hydrolysis of ATP in the presence of single-stranded DNA, the ATP-dependent uptake of single-stranded DNA by duplex DNA, and the ATP-dependent hybridization of homologous single-stranded DNAs. It interacts with LexA causing its activation and leading to its autocatalytic cleavage. This Mycolicibacterium vanbaalenii (strain DSM 7251 / JCM 13017 / BCRC 16820 / KCTC 9966 / NRRL B-24157 / PYR-1) (Mycobacterium vanbaalenii) protein is Protein RecA.